The following is a 68-amino-acid chain: Large ribosomal subunit protein uL29 (68 aa).

The protein belongs to the universal ribosomal protein uL29 family.

The polypeptide is Large ribosomal subunit protein uL29 (Streptococcus thermophilus (strain ATCC BAA-250 / LMG 18311)).